The following is a 359-amino-acid chain: Phosphatidylglycerol--prolipoprotein diacylglyceryl transferase (359 aa).

Helical transmembrane passes span Val-24–Gly-44, Val-58–Val-78, Val-98–Ile-118, and Gly-124–Ile-144. Arg-146 provides a ligand contact to a 1,2-diacyl-sn-glycero-3-phospho-(1'-sn-glycerol). Helical transmembrane passes span Phe-193 to Leu-213, Ile-222 to Glu-243, and Val-258 to Thr-278. A disordered region spans residues Pro-284–Asp-359. The segment covering Ile-306–Gly-323 has biased composition (basic and acidic residues). Low complexity predominate over residues Ala-336–Thr-349. A compositionally biased stretch (basic and acidic residues) spans Ile-350–Asp-359.

The protein belongs to the Lgt family.

It localises to the cell membrane. It carries out the reaction L-cysteinyl-[prolipoprotein] + a 1,2-diacyl-sn-glycero-3-phospho-(1'-sn-glycerol) = an S-1,2-diacyl-sn-glyceryl-L-cysteinyl-[prolipoprotein] + sn-glycerol 1-phosphate + H(+). It functions in the pathway protein modification; lipoprotein biosynthesis (diacylglyceryl transfer). Functionally, catalyzes the transfer of the diacylglyceryl group from phosphatidylglycerol to the sulfhydryl group of the N-terminal cysteine of a prolipoprotein, the first step in the formation of mature lipoproteins. This chain is Phosphatidylglycerol--prolipoprotein diacylglyceryl transferase, found in Rhodococcus jostii (strain RHA1).